The sequence spans 84 residues: Small ribosomal subunit protein uS17 (84 aa).

It belongs to the universal ribosomal protein uS17 family. In terms of assembly, part of the 30S ribosomal subunit.

In terms of biological role, one of the primary rRNA binding proteins, it binds specifically to the 5'-end of 16S ribosomal RNA. In Clostridium botulinum (strain Alaska E43 / Type E3), this protein is Small ribosomal subunit protein uS17.